Consider the following 192-residue polypeptide: UPF0149 protein VP2588 (192 aa).

Belongs to the UPF0149 family.

In Vibrio parahaemolyticus serotype O3:K6 (strain RIMD 2210633), this protein is UPF0149 protein VP2588.